Consider the following 264-residue polypeptide: Small ribosomal subunit protein uS2 (264 aa).

The protein belongs to the universal ribosomal protein uS2 family.

This Synechococcus sp. (strain JA-2-3B'a(2-13)) (Cyanobacteria bacterium Yellowstone B-Prime) protein is Small ribosomal subunit protein uS2.